The primary structure comprises 1109 residues: Pesticidal crystal protein Cry28Aa (1109 aa).

This sequence belongs to the delta endotoxin family.

Its function is as follows. Promotes colloidosmotic lysis by binding to the midgut epithelial cells of insects. The chain is Pesticidal crystal protein Cry28Aa (cry28Aa) from Bacillus thuringiensis subsp. finitimus.